A 325-amino-acid polypeptide reads, in one-letter code: MLTFQQLILKLQSYWDAQGCALLQPIDLEVGAGTSHVHTFLRAIGPEPWRAAYVQPSRRPKDGRYGENPNRLQHYYQYQVVLKPAPENILDLYLGSLQALGLDLKQNDVRFVEDDWENPTLGAWGLGWEVWLNGMEVTQFTYFQQVGGLDCKPITGEITYGIERLAMYLQQVENVYDLVWTEWEEPGPNGPVKRRLTYGDVYHQNEVEQSTYNFEHADTAVLFRRFAEHEAEAKRLMGVREEGAADDGAAVPQLALPAYEQVLKAGHTFNLLDARGAISVTERAAYIGRIRNLSRLVAQAYYDSRERLGFPMCGTAAAPAATEAA.

It belongs to the class-II aminoacyl-tRNA synthetase family. As to quaternary structure, tetramer of two alpha and two beta subunits.

It is found in the cytoplasm. It catalyses the reaction tRNA(Gly) + glycine + ATP = glycyl-tRNA(Gly) + AMP + diphosphate. This Ralstonia nicotianae (strain ATCC BAA-1114 / GMI1000) (Ralstonia solanacearum) protein is Glycine--tRNA ligase alpha subunit.